Reading from the N-terminus, the 89-residue chain is Small ribosomal subunit protein uS15 (89 aa).

Belongs to the universal ribosomal protein uS15 family. In terms of assembly, part of the 30S ribosomal subunit. Forms a bridge to the 50S subunit in the 70S ribosome, contacting the 23S rRNA.

Its function is as follows. One of the primary rRNA binding proteins, it binds directly to 16S rRNA where it helps nucleate assembly of the platform of the 30S subunit by binding and bridging several RNA helices of the 16S rRNA. Forms an intersubunit bridge (bridge B4) with the 23S rRNA of the 50S subunit in the ribosome. The protein is Small ribosomal subunit protein uS15 of Chlamydia abortus (strain DSM 27085 / S26/3) (Chlamydophila abortus).